A 512-amino-acid polypeptide reads, in one-letter code: Cobyric acid synthase (512 aa).

A GATase cobBQ-type domain is found at 251–451 (ALDITVIRLP…IHGLFDSANF (201 aa)). Cys-332 (nucleophile) is an active-site residue. His-443 is an active-site residue.

It belongs to the CobB/CobQ family. CobQ subfamily.

It participates in cofactor biosynthesis; adenosylcobalamin biosynthesis. Functionally, catalyzes amidations at positions B, D, E, and G on adenosylcobyrinic A,C-diamide. NH(2) groups are provided by glutamine, and one molecule of ATP is hydrogenolyzed for each amidation. This Photorhabdus laumondii subsp. laumondii (strain DSM 15139 / CIP 105565 / TT01) (Photorhabdus luminescens subsp. laumondii) protein is Cobyric acid synthase.